A 470-amino-acid chain; its full sequence is Coproporphyrinogen III oxidase (470 aa).

Residues 12 to 17, 41 to 42, Lys-49, 63 to 66, Val-256, Trp-409, and 448 to 450 each bind FAD; these read GGGITG, EA, GPDS, and VGI.

This sequence belongs to the protoporphyrinogen/coproporphyrinogen oxidase family. Coproporphyrinogen III oxidase subfamily. In terms of assembly, monomer. FAD serves as cofactor.

It is found in the cytoplasm. The protein localises to the cell membrane. The enzyme catalyses coproporphyrinogen III + 3 O2 = coproporphyrin III + 3 H2O2. It functions in the pathway porphyrin-containing compound metabolism; protoheme biosynthesis. With respect to regulation, only weakly inhibited by acifluorfen, in contrast to eukaryotic family members. Weakly inhibited by methylacifluorfen. Bilirubin, biliverdin and hemin are all competitive inhibitors. In terms of biological role, involved in coproporphyrin-dependent heme b biosynthesis. Catalyzes the oxidation of coproporphyrinogen III to coproporphyrin III. Can also oxidize protoporphyrinogen IX to protoporphyrin-IX. The specific activity for the oxidation of coproporphyrinogen III is much higher than that for the oxidation of protoporphyrinogen IX. Can also oxidize mesoporphyrinogen IX, but not uroporphyrinogen III. This Bacillus subtilis (strain 168) protein is Coproporphyrinogen III oxidase.